The chain runs to 732 residues: Ubiquitin carboxyl-terminal hydrolase 21 (732 aa).

A compositionally biased stretch (pro residues) spans 1–10; sequence MAEFSDPPPS. The disordered stretch occupies residues 1-111; that stretch reads MAEFSDPPPS…ISPVSNNNHL (111 aa). 2 stretches are compositionally biased toward polar residues: residues 11 to 31 and 38 to 53; these read NLSS…SSPT and VTNS…QIQA. The span at 55-69 shows a compositional bias: low complexity; sequence SPAKPDGSSSSPPDK. The region spanning 163-469 is the USP domain; the sequence is AGLYNSGNTC…PAYILFYARE (307 aa). The Nucleophile role is filled by C172. H428 functions as the Proton acceptor in the catalytic mechanism. The disordered stretch occupies residues 534–732; sequence KEEVFHSAES…SSNMRRSIKL (199 aa). Residues 540-551 show a composition bias toward low complexity; the sequence is SAESSNNEDSSA. Positions 583–609 are enriched in basic and acidic residues; sequence AYIDKSEKPFAETSQPKEPKPFADRAS. Residues 719-732 show a composition bias toward basic residues; that stretch reads KKKKSSNMRRSIKL.

It belongs to the peptidase C19 family.

The enzyme catalyses Thiol-dependent hydrolysis of ester, thioester, amide, peptide and isopeptide bonds formed by the C-terminal Gly of ubiquitin (a 76-residue protein attached to proteins as an intracellular targeting signal).. In terms of biological role, recognizes and hydrolyzes the peptide bond at the C-terminal Gly of ubiquitin. Involved in the processing of poly-ubiquitin precursors as well as that of ubiquitinated proteins. The chain is Ubiquitin carboxyl-terminal hydrolase 21 (UBP21) from Arabidopsis thaliana (Mouse-ear cress).